Here is a 331-residue protein sequence, read N- to C-terminus: Beta-ketoacyl-[acyl-carrier-protein] synthase III (331 aa).

Active-site residues include Cys-113 and His-256. Residues 257–261 form an ACP-binding region; that stretch reads QANKR. Residue Asn-286 is part of the active site.

It belongs to the thiolase-like superfamily. FabH family. As to quaternary structure, homodimer.

Its subcellular location is the cytoplasm. The catalysed reaction is malonyl-[ACP] + acetyl-CoA + H(+) = 3-oxobutanoyl-[ACP] + CO2 + CoA. Its pathway is lipid metabolism; fatty acid biosynthesis. Its function is as follows. Catalyzes the condensation reaction of fatty acid synthesis by the addition to an acyl acceptor of two carbons from malonyl-ACP. Catalyzes the first condensation reaction which initiates fatty acid synthesis and may therefore play a role in governing the total rate of fatty acid production. Possesses both acetoacetyl-ACP synthase and acetyl transacylase activities. Its substrate specificity determines the biosynthesis of branched-chain and/or straight-chain of fatty acids. In Solibacter usitatus (strain Ellin6076), this protein is Beta-ketoacyl-[acyl-carrier-protein] synthase III.